The primary structure comprises 349 residues: Isopentenyl-diphosphate delta-isomerase (349 aa).

6–7 (RK) serves as a coordination point for substrate. Residues 62-64 (AMT), serine 93, and asparagine 122 each bind FMN. Residue glutamine 152 participates in substrate binding. Residue glutamate 153 coordinates Mg(2+). Residues lysine 184, threonine 214, 258–259 (GG), and 280–281 (AG) contribute to the FMN site.

Belongs to the IPP isomerase type 2 family. Homooctamer. Dimer of tetramers. FMN serves as cofactor. The cofactor is NADPH. Requires Mg(2+) as cofactor.

It localises to the cytoplasm. The catalysed reaction is isopentenyl diphosphate = dimethylallyl diphosphate. Involved in the biosynthesis of isoprenoids. Catalyzes the 1,3-allylic rearrangement of the homoallylic substrate isopentenyl (IPP) to its allylic isomer, dimethylallyl diphosphate (DMAPP). The polypeptide is Isopentenyl-diphosphate delta-isomerase (Bacillus anthracis (strain A0248)).